The sequence spans 159 residues: Large ribosomal subunit protein uL23m (159 aa).

The protein belongs to the universal ribosomal protein uL23 family. Component of the mitochondrial ribosome large subunit (39S) which comprises a 16S rRNA and about 50 distinct proteins.

It is found in the mitochondrion. The protein is Large ribosomal subunit protein uL23m (mrpl-23) of Caenorhabditis briggsae.